The following is a 212-amino-acid chain: 2,3-bisphosphoglycerate-dependent phosphoglycerate mutase (212 aa).

Substrate is bound by residues 9-16 (RHGQSEWN), 22-23 (TG), Arg-61, 88-91 (ERDY), Lys-99, 115-116 (RR), and 159-160 (GN). The active-site Tele-phosphohistidine intermediate is the His-10. Catalysis depends on Glu-88, which acts as the Proton donor/acceptor.

This sequence belongs to the phosphoglycerate mutase family. BPG-dependent PGAM subfamily. As to quaternary structure, homodimer.

It carries out the reaction (2R)-2-phosphoglycerate = (2R)-3-phosphoglycerate. Its pathway is carbohydrate degradation; glycolysis; pyruvate from D-glyceraldehyde 3-phosphate: step 3/5. In terms of biological role, catalyzes the interconversion of 2-phosphoglycerate and 3-phosphoglycerate. The polypeptide is 2,3-bisphosphoglycerate-dependent phosphoglycerate mutase (Methylorubrum extorquens (strain CM4 / NCIMB 13688) (Methylobacterium extorquens)).